Consider the following 323-residue polypeptide: MKKKTGYSPYPPAIFLMGPTASGKSALALHIARYLPVEIISVDSAQVYRHMNIGTAKPGPEALAATPHHLIDLIDPHEHYSAARFRTDALRTMREIADRGSIPLLAGGTMLYFKTLLEGLSELPSADSDVRAAIEAKARKSGWPAMHQELFRLDSVSAERIKPTDSQRIQRALEVFYLTGKPMSETLRKPKNVSLPYEVVKIALVPGNRQALHQRIACRFEQMLKHGLIDEVRAIRDKFYLSDENPSMRCVGYRQVWMHLENATDALRMREMALAATRQLAKRQLTWLRSMKETREFDCLQENLPEQVKTYLLNTGLKFTEVS.

Residue 18 to 25 (GPTASGKS) coordinates ATP. Residue 20–25 (TASGKS) participates in substrate binding. Interaction with substrate tRNA stretches follow at residues 43–46 (DSAQ), 167–171 (QRIQR), and 249–254 (RCVGYR).

The protein belongs to the IPP transferase family. In terms of assembly, monomer. The cofactor is Mg(2+).

It catalyses the reaction adenosine(37) in tRNA + dimethylallyl diphosphate = N(6)-dimethylallyladenosine(37) in tRNA + diphosphate. Its function is as follows. Catalyzes the transfer of a dimethylallyl group onto the adenine at position 37 in tRNAs that read codons beginning with uridine, leading to the formation of N6-(dimethylallyl)adenosine (i(6)A). The protein is tRNA dimethylallyltransferase of Nitrosospira multiformis (strain ATCC 25196 / NCIMB 11849 / C 71).